The sequence spans 484 residues: GRIP domain-containing protein RUD3 (484 aa).

The span at M1 to H15 shows a compositional bias: basic residues. The interval M1 to G75 is disordered. Residues P16–E30 show a composition bias toward basic and acidic residues. Residues S55 and S64 each carry the phosphoserine modification. Basic and acidic residues predominate over residues K61–V72. The stretch at L84–A383 forms a coiled coil. The 52-residue stretch at S401 to I452 folds into the GRIP domain. S468 is modified (phosphoserine).

The protein localises to the golgi apparatus lumen. In terms of biological role, involved in the structural organization of the cis-Golgi and in vesicle targeting/fusion stages of ER to Golgi transport. The protein is GRIP domain-containing protein RUD3 (RUD3) of Saccharomyces cerevisiae (strain ATCC 204508 / S288c) (Baker's yeast).